A 173-amino-acid chain; its full sequence is C-phycocyanin-3 beta subunit (173 aa).

Position 73 is an N4-methylasparagine (Asn73). Residues Cys83 and Cys154 each coordinate (2R,3E)-phycocyanobilin.

The protein belongs to the phycobiliprotein family. In terms of assembly, heterodimer of an alpha and a beta subunit, which further assembles into trimers and the trimers into hexamers. Contains two covalently linked bilin chromophores.

The protein localises to the cellular thylakoid membrane. In terms of biological role, light-harvesting photosynthetic bile pigment-protein from the phycobiliprotein complex (phycobilisome, PBS). Phycocyanin is the major phycobiliprotein in the PBS rod. The protein is C-phycocyanin-3 beta subunit (cpcB3) of Microchaete diplosiphon (Fremyella diplosiphon).